Reading from the N-terminus, the 253-residue chain is Triosephosphate isomerase (253 aa).

9–11 (NWK) is a binding site for substrate. The active-site Electrophile is the His-97. The active-site Proton acceptor is Glu-169. Substrate is bound by residues Gly-175, Ser-215, and 236–237 (GG).

The protein belongs to the triosephosphate isomerase family. Homodimer.

Its subcellular location is the cytoplasm. The catalysed reaction is D-glyceraldehyde 3-phosphate = dihydroxyacetone phosphate. Its pathway is carbohydrate biosynthesis; gluconeogenesis. It participates in carbohydrate degradation; glycolysis; D-glyceraldehyde 3-phosphate from glycerone phosphate: step 1/1. Involved in the gluconeogenesis. Catalyzes stereospecifically the conversion of dihydroxyacetone phosphate (DHAP) to D-glyceraldehyde-3-phosphate (G3P). In Staphylococcus aureus (strain NCTC 8325 / PS 47), this protein is Triosephosphate isomerase.